The sequence spans 281 residues: 4-deoxy-L-threo-5-hexosulose-uronate ketol-isomerase (281 aa).

Residues His198, His200, Glu205, and His248 each contribute to the Zn(2+) site.

Belongs to the KduI family. Zn(2+) serves as cofactor.

It catalyses the reaction 5-dehydro-4-deoxy-D-glucuronate = 3-deoxy-D-glycero-2,5-hexodiulosonate. It functions in the pathway glycan metabolism; pectin degradation; 2-dehydro-3-deoxy-D-gluconate from pectin: step 4/5. Catalyzes the isomerization of 5-dehydro-4-deoxy-D-glucuronate to 3-deoxy-D-glycero-2,5-hexodiulosonate. This chain is 4-deoxy-L-threo-5-hexosulose-uronate ketol-isomerase, found in Lacticaseibacillus casei (strain BL23) (Lactobacillus casei).